The sequence spans 33 residues: Brevinin-2JD (33 aa).

An intrachain disulfide couples Cys-27 to Cys-33.

As to expression, expressed by the skin glands.

Its subcellular location is the secreted. Functionally, has antibacterial activity against E.coli ATCC 25992 (MIC=38 uM), E.coli CIB 84492 (MIC=38 uM), S.aureus ATCC 25923 (MIC=19 uM) and S.aureus CIB 85462 (MIC=19 uM). Has antifungal activity against C.albicans (MIC=19 uM). Has weak hemolytic activity against rabbit erythrocytes. The chain is Brevinin-2JD from Odorrana jingdongensis (Jingdong frog).